The primary structure comprises 232 residues: 5'-methylthioadenosine/S-adenosylhomocysteine nucleosidase (232 aa).

Residue Glu-12 is the Proton acceptor of the active site. Residues Gly-78, Ile-152, and 173–174 (ME) contribute to the substrate site. The active-site Proton donor is the Asp-197.

This sequence belongs to the PNP/UDP phosphorylase family. MtnN subfamily. As to quaternary structure, homodimer.

It catalyses the reaction S-adenosyl-L-homocysteine + H2O = S-(5-deoxy-D-ribos-5-yl)-L-homocysteine + adenine. The catalysed reaction is S-methyl-5'-thioadenosine + H2O = 5-(methylsulfanyl)-D-ribose + adenine. It carries out the reaction 5'-deoxyadenosine + H2O = 5-deoxy-D-ribose + adenine. It participates in amino-acid biosynthesis; L-methionine biosynthesis via salvage pathway; S-methyl-5-thio-alpha-D-ribose 1-phosphate from S-methyl-5'-thioadenosine (hydrolase route): step 1/2. Catalyzes the irreversible cleavage of the glycosidic bond in both 5'-methylthioadenosine (MTA) and S-adenosylhomocysteine (SAH/AdoHcy) to adenine and the corresponding thioribose, 5'-methylthioribose and S-ribosylhomocysteine, respectively. Also cleaves 5'-deoxyadenosine, a toxic by-product of radical S-adenosylmethionine (SAM) enzymes, into 5-deoxyribose and adenine. Thus, is required for in vivo function of the radical SAM enzymes biotin synthase and lipoic acid synthase, that are inhibited by 5'-deoxyadenosine accumulation. In Escherichia fergusonii (strain ATCC 35469 / DSM 13698 / CCUG 18766 / IAM 14443 / JCM 21226 / LMG 7866 / NBRC 102419 / NCTC 12128 / CDC 0568-73), this protein is 5'-methylthioadenosine/S-adenosylhomocysteine nucleosidase.